A 522-amino-acid polypeptide reads, in one-letter code: Signal transduction histidine-protein kinase/phosphatase MprB (522 aa).

Topologically, residues 1–30 (MIRLHRPQRPPLRAPLRATPSLSLRWRVML) are cytoplasmic. Residues 31-51 (LAMSMVAMVVVLMAFAVYAVI) traverse the membrane as a helical segment. Over 52-167 (SAALYSDIDN…PTEAVMNKLR (116 aa)) the chain is Extracellular. Residues 168–188 (WVLLIVGGVGVAVAAVAGGMV) form a helical membrane-spanning segment. At 189–522 (TRAGLRPVAR…SVDSQSARAR (334 aa)) the chain is on the cytoplasmic side. The 53-residue stretch at 190-242 (RAGLRPVARLTEAAERVARTDDLRPIPVFGSDELARLTESFNLMLRALAESRE) folds into the HAMP domain. Residues 250-470 (DAGHELRTPL…SFYVLLPGRP (221 aa)) form the Histidine kinase domain. His-253 bears the Phosphohistidine; by autocatalysis mark. The interval 468–522 (GRPLPPAGHSTPAGESETDKAEAATDPAVPVAGDTANSRESANVISVDSQSARAR) is disordered. Over residues 502-522 (TANSRESANVISVDSQSARAR) the composition is skewed to polar residues.

Mg(2+) serves as cofactor. It depends on Mn(2+) as a cofactor. In terms of processing, autophosphorylated.

The protein resides in the cell membrane. It catalyses the reaction ATP + protein L-histidine = ADP + protein N-phospho-L-histidine.. In terms of biological role, member of the two-component regulatory system MprB/MprA which contributes to maintaining a balance among several systems involved in stress resistance and is required for establishment and maintenance of persistent infection in the host. In response to environmental signals MprB acts both as a membrane-associated protein kinase that undergoes autophosphorylation and subsequently transfers the phosphate to MprA, and a protein phosphatase that dephosphorylates phospho-MprA. The chain is Signal transduction histidine-protein kinase/phosphatase MprB (mprB) from Mycobacterium avium (strain 104).